A 60-amino-acid chain; its full sequence is Metallothionein B (60 aa).

The tract at residues 1 to 28 (MDPCECSKTGSCNCGGSCKCSNCACTSC) is beta. A divalent metal cation is bound by residues cysteine 4, cysteine 6, cysteine 12, cysteine 14, cysteine 18, cysteine 20, cysteine 23, cysteine 25, cysteine 28, cysteine 32, cysteine 33, cysteine 35, cysteine 36, cysteine 40, cysteine 43, cysteine 47, cysteine 49, cysteine 54, cysteine 58, and cysteine 59. The tract at residues 29–60 (KKSCCPCCPSDCSKCASGCVCKGKTCDTSCCQ) is alpha.

The protein belongs to the metallothionein superfamily. Type 1 family.

Functionally, metallothioneins have a high content of cysteine residues that bind various heavy metals. The polypeptide is Metallothionein B (mtb) (Oncorhynchus mykiss (Rainbow trout)).